The chain runs to 204 residues: MAKMYGKGKTAIESEELQKRRWQIELEFVQCLSNPNYLNFLAQRGFFKDQSFINYLKYLQYWKEPDYAKYLMYPMCLYFLDLLQYEHFRREIVNSQCCKFIDDQAILQWQHYTRKRIKLIENVTAAQQQQQQLQQQQQQANGMEAATGGESAAPTPNVNGSASTADSQQTSSALQPVQAQPGNPQQQQQINGVASGANIKLELN.

The interval 134–204 (QQQQQQANGM…SGANIKLELN (71 aa)) is disordered. A compositionally biased stretch (low complexity) spans 161-194 (SASTADSQQTSSALQPVQAQPGNPQQQQQINGVA).

The protein belongs to the Mediator complex subunit 31 family. Component of the Mediator complex, which includes at least MED4, MED6, MED14, MED17, MED18, MED20, MED21, MED23, MED24, MED27, MED30 and MED31.

It localises to the nucleus. Its function is as follows. Component of the Mediator complex, a coactivator involved in the regulated transcription of nearly all RNA polymerase II-dependent genes. Mediator functions as a bridge to convey information from gene-specific regulatory proteins to the basal RNA polymerase II transcription machinery. Mediator is recruited to promoters by direct interactions with regulatory proteins and serves as a scaffold for the assembly of a functional preinitiation complex with RNA polymerase II and the general transcription factors. Required for activated transcription of the MtnA gene. This chain is Mediator of RNA polymerase II transcription subunit 31 (MED31), found in Drosophila melanogaster (Fruit fly).